Reading from the N-terminus, the 144-residue chain is 3-hydroxyacyl-[acyl-carrier-protein] dehydratase FabZ (144 aa).

H48 is an active-site residue.

This sequence belongs to the thioester dehydratase family. FabZ subfamily.

Its subcellular location is the cytoplasm. The enzyme catalyses a (3R)-hydroxyacyl-[ACP] = a (2E)-enoyl-[ACP] + H2O. In terms of biological role, involved in unsaturated fatty acids biosynthesis. Catalyzes the dehydration of short chain beta-hydroxyacyl-ACPs and long chain saturated and unsaturated beta-hydroxyacyl-ACPs. This Bacillus thuringiensis (strain Al Hakam) protein is 3-hydroxyacyl-[acyl-carrier-protein] dehydratase FabZ.